The following is a 253-amino-acid chain: Imidazole glycerol phosphate synthase subunit HisF (253 aa).

Active-site residues include D11 and D130.

It belongs to the HisA/HisF family. Heterodimer of HisH and HisF.

It localises to the cytoplasm. It catalyses the reaction 5-[(5-phospho-1-deoxy-D-ribulos-1-ylimino)methylamino]-1-(5-phospho-beta-D-ribosyl)imidazole-4-carboxamide + L-glutamine = D-erythro-1-(imidazol-4-yl)glycerol 3-phosphate + 5-amino-1-(5-phospho-beta-D-ribosyl)imidazole-4-carboxamide + L-glutamate + H(+). The protein operates within amino-acid biosynthesis; L-histidine biosynthesis; L-histidine from 5-phospho-alpha-D-ribose 1-diphosphate: step 5/9. Functionally, IGPS catalyzes the conversion of PRFAR and glutamine to IGP, AICAR and glutamate. The HisF subunit catalyzes the cyclization activity that produces IGP and AICAR from PRFAR using the ammonia provided by the HisH subunit. The protein is Imidazole glycerol phosphate synthase subunit HisF of Desulfitobacterium hafniense (strain DSM 10664 / DCB-2).